The sequence spans 400 residues: Methylthioribose kinase (400 aa).

ATP-binding positions include Asn-40, Lys-57, and 111 to 113 (EDL). A substrate-binding site is contributed by Asp-229. 246–248 (DAE) serves as a coordination point for ATP. Position 344 (Arg-344) interacts with substrate.

Belongs to the methylthioribose kinase family. As to quaternary structure, homodimer.

The catalysed reaction is 5-(methylsulfanyl)-D-ribose + ATP = 5-(methylsulfanyl)-alpha-D-ribose 1-phosphate + ADP + H(+). It functions in the pathway amino-acid biosynthesis; L-methionine biosynthesis via salvage pathway; S-methyl-5-thio-alpha-D-ribose 1-phosphate from S-methyl-5'-thioadenosine (hydrolase route): step 2/2. Its function is as follows. Catalyzes the phosphorylation of methylthioribose into methylthioribose-1-phosphate. This is Methylthioribose kinase from Pectobacterium atrosepticum (strain SCRI 1043 / ATCC BAA-672) (Erwinia carotovora subsp. atroseptica).